The chain runs to 234 residues: S-adenosylmethionine synthase 1 (234 aa).

ATP contacts are provided by residues 10 to 12 (DGK), 78 to 81 (SGRF), aspartate 89, 95 to 96 (RK), alanine 112, lysine 116, and lysine 120. Residue aspartate 89 coordinates L-methionine. Lysine 120 lines the L-methionine pocket.

The protein belongs to the AdoMet synthase family. Homotetramer. Mn(2+) is required as a cofactor. Requires Mg(2+) as cofactor. It depends on Co(2+) as a cofactor. K(+) serves as cofactor. As to expression, mainly in floral buds and roots.

The protein localises to the cytoplasm. The catalysed reaction is L-methionine + ATP + H2O = S-adenosyl-L-methionine + phosphate + diphosphate. Its pathway is amino-acid biosynthesis; S-adenosyl-L-methionine biosynthesis; S-adenosyl-L-methionine from L-methionine: step 1/1. Catalyzes the formation of S-adenosylmethionine from methionine and ATP. The reaction comprises two steps that are both catalyzed by the same enzyme: formation of S-adenosylmethionine (AdoMet) and triphosphate, and subsequent hydrolysis of the triphosphate. This is S-adenosylmethionine synthase 1 (SMS-1) from Petroselinum crispum (Parsley).